A 257-amino-acid polypeptide reads, in one-letter code: Acetylglutamate kinase (257 aa).

Substrate-binding positions include G41 to G42, R63, and N156.

The protein belongs to the acetylglutamate kinase family. ArgB subfamily.

It is found in the cytoplasm. It carries out the reaction N-acetyl-L-glutamate + ATP = N-acetyl-L-glutamyl 5-phosphate + ADP. It functions in the pathway amino-acid biosynthesis; L-arginine biosynthesis; N(2)-acetyl-L-ornithine from L-glutamate: step 2/4. Catalyzes the ATP-dependent phosphorylation of N-acetyl-L-glutamate. This is Acetylglutamate kinase from Geobacillus sp. (strain WCH70).